The sequence spans 215 residues: Adenylate kinase (215 aa).

10–15 contributes to the ATP binding site; it reads GAGKGT. An NMP region spans residues 30–59; the sequence is STGDILRANVRDGTKLGKEAKGYMDKGELV. AMP-binding positions include Thr31, Arg36, 57–59, 85–88, and Gln92; these read ELV and GYPR. The tract at residues 126–162 is LID; sequence GRYVCTCGESYHMKFNPPKKENVCDACGADLYQRDDD. Residue Arg127 participates in ATP binding. Residues Cys130 and Cys132 each contribute to the Zn(2+) site. 135–136 is a binding site for ATP; that stretch reads SY. Cys149 and Cys152 together coordinate Zn(2+). Residues Arg159 and Arg170 each contribute to the AMP site. Gly198 contacts ATP.

This sequence belongs to the adenylate kinase family. In terms of assembly, monomer.

The protein resides in the cytoplasm. It catalyses the reaction AMP + ATP = 2 ADP. Its pathway is purine metabolism; AMP biosynthesis via salvage pathway; AMP from ADP: step 1/1. Functionally, catalyzes the reversible transfer of the terminal phosphate group between ATP and AMP. Plays an important role in cellular energy homeostasis and in adenine nucleotide metabolism. The chain is Adenylate kinase from Methanococcoides burtonii (strain DSM 6242 / NBRC 107633 / OCM 468 / ACE-M).